Consider the following 540-residue polypeptide: Chaperonin GroEL (540 aa).

ATP contacts are provided by residues 29–32 (TIGP), 86–90 (DGTTT), glycine 413, 476–478 (NAA), and aspartate 492.

This sequence belongs to the chaperonin (HSP60) family. As to quaternary structure, forms a cylinder of 14 subunits composed of two heptameric rings stacked back-to-back. Interacts with the co-chaperonin GroES.

It is found in the cytoplasm. The catalysed reaction is ATP + H2O + a folded polypeptide = ADP + phosphate + an unfolded polypeptide.. Its function is as follows. Together with its co-chaperonin GroES, plays an essential role in assisting protein folding. The GroEL-GroES system forms a nano-cage that allows encapsulation of the non-native substrate proteins and provides a physical environment optimized to promote and accelerate protein folding. The polypeptide is Chaperonin GroEL (Staphylococcus carnosus (strain TM300)).